A 508-amino-acid polypeptide reads, in one-letter code: Beta-glucosidase 10 (508 aa).

A signal peptide spans 1–22 (MKLYSLLSVFLVILLATSDSDA). A beta-D-glucoside contacts are provided by residues Gln42, His142, and 187-188 (NE). The Proton donor role is filled by Glu188. Cysteines 207 and 215 form a disulfide. N-linked (GlcNAc...) asparagine glycosylation is found at Asn214 and Asn219. Residue Tyr331 participates in a beta-D-glucoside binding. Residue Asn365 is glycosylated (N-linked (GlcNAc...) asparagine). An a beta-D-glucoside-binding site is contributed by Glu398. Catalysis depends on Glu398, which acts as the Nucleophile. Asn431 carries N-linked (GlcNAc...) asparagine glycosylation. A beta-D-glucoside-binding residues include Trp441 and Phe457. N-linked (GlcNAc...) asparagine glycosylation is found at Asn463, Asn485, and Asn501.

This sequence belongs to the glycosyl hydrolase 1 family.

It catalyses the reaction Hydrolysis of terminal, non-reducing beta-D-glucosyl residues with release of beta-D-glucose.. The polypeptide is Beta-glucosidase 10 (Arabidopsis thaliana (Mouse-ear cress)).